A 364-amino-acid chain; its full sequence is F-box/LRR-repeat protein At1g55660 (364 aa).

Residues 52–98 (MDKISQLPDELLVKVLSFLSTKDAVSTSILSMRWKSLWMWLPKLEYN) form the F-box domain. LRR repeat units follow at residues 158-179 (NVRE…LPKS), 185-206 (SIVI…VCLP), 207-228 (SLKT…HRLL), 233-254 (VLED…SVIV), 256-277 (SLQR…KMNS), and 279-300 (SLKY…ESDS).

The sequence is that of F-box/LRR-repeat protein At1g55660 from Arabidopsis thaliana (Mouse-ear cress).